A 431-amino-acid polypeptide reads, in one-letter code: ORC1-type DNA replication protein 14 (431 aa).

ATP is bound by residues 62–66 (TGKSL), Y219, and R231.

The protein belongs to the CDC6/cdc18 family.

Its function is as follows. Involved in regulation of DNA replication. The chain is ORC1-type DNA replication protein 14 (cdc6n) from Haloarcula marismortui (strain ATCC 43049 / DSM 3752 / JCM 8966 / VKM B-1809) (Halobacterium marismortui).